A 197-amino-acid chain; its full sequence is MPTKSLERLILEFNKLPGVGQKSATRYAFHILNQSEEDVKNFAEALLAVKENVKKCHVCGNYCESDTCNICSDNARDHRIICVVEESKDIMILEKTTKFRGVYHVLNGRLDPLNGITPNELNIKSLLERIAKDDIEEIILATNPNIEGETTAMYLAKLMKNFGIKITKLASGIPMGGNLEFSDTATISRALDDRIEI.

Residues 56–71 (CHVCGNYCESDTCNIC) form a C4-type zinc finger. The 96-residue stretch at 79–174 (RIICVVEESK…KITKLASGIP (96 aa)) folds into the Toprim domain.

It belongs to the RecR family.

Its function is as follows. May play a role in DNA repair. It seems to be involved in an RecBC-independent recombinational process of DNA repair. It may act with RecF and RecO. This is Recombination protein RecR from Fusobacterium nucleatum subsp. nucleatum (strain ATCC 25586 / DSM 15643 / BCRC 10681 / CIP 101130 / JCM 8532 / KCTC 2640 / LMG 13131 / VPI 4355).